Here is a 366-residue protein sequence, read N- to C-terminus: Flagellar P-ring protein (366 aa).

Residues 1–22 (MFTRKSVILMAVLLIWSAVSYA) form the signal peptide.

It belongs to the FlgI family. In terms of assembly, the basal body constitutes a major portion of the flagellar organelle and consists of four rings (L,P,S, and M) mounted on a central rod.

It is found in the periplasm. Its subcellular location is the bacterial flagellum basal body. In terms of biological role, assembles around the rod to form the L-ring and probably protects the motor/basal body from shearing forces during rotation. This Hydrogenovibrio crunogenus (strain DSM 25203 / XCL-2) (Thiomicrospira crunogena) protein is Flagellar P-ring protein.